The primary structure comprises 447 residues: Phosphoglucosamine mutase (447 aa).

Residue Ser106 is the Phosphoserine intermediate of the active site. Ser106, Asp245, Asp247, and Asp249 together coordinate Mg(2+). Ser106 bears the Phosphoserine mark.

The protein belongs to the phosphohexose mutase family. Requires Mg(2+) as cofactor. In terms of processing, activated by phosphorylation.

The catalysed reaction is alpha-D-glucosamine 1-phosphate = D-glucosamine 6-phosphate. Functionally, catalyzes the conversion of glucosamine-6-phosphate to glucosamine-1-phosphate. In Cupriavidus metallidurans (strain ATCC 43123 / DSM 2839 / NBRC 102507 / CH34) (Ralstonia metallidurans), this protein is Phosphoglucosamine mutase.